The chain runs to 364 residues: Fructose-bisphosphate aldolase B (364 aa).

2 residues coordinate substrate: arginine 56 and lysine 147. Residue glutamate 188 is the Proton acceptor of the active site. Lysine 230 serves as the catalytic Schiff-base intermediate with dihydroxyacetone-P.

The protein belongs to the class I fructose-bisphosphate aldolase family. In terms of assembly, homotetramer.

It is found in the cytoplasm. Its subcellular location is the cytoskeleton. The protein localises to the microtubule organizing center. It localises to the centrosome. The protein resides in the centriolar satellite. The enzyme catalyses beta-D-fructose 1,6-bisphosphate = D-glyceraldehyde 3-phosphate + dihydroxyacetone phosphate. The protein operates within carbohydrate degradation; glycolysis; D-glyceraldehyde 3-phosphate and glycerone phosphate from D-glucose: step 4/4. The sequence is that of Fructose-bisphosphate aldolase B (aldob) from Sparus aurata (Gilthead sea bream).